Here is a 637-residue protein sequence, read N- to C-terminus: MMELKMHNVKGTENLKFDAEVGKVLNIVIHSLYTNKDIFLRELVSNASDACDKLRYESQLNPNLLDSSGELKITISSNKDENELYVTDNGIGMSRQDLIGNLGTIASSGTQKFLDAIKNSKDSSQAVELIGKFGVGFYSSFMVASEVIVESRKAGEEESWVWRSTGDGEYSISKLDNQIPCGTKITLVMRPEENEFLDKFRIENIVTTYSDHINFPVEFIDEEGKSEKLNSKAAIWTKLKNDVTQEEHNDFFRGVAHVGGEPWMILHNKNEGAIEYTNLLYVPSIKPFDLFHPDRRCSVKLYVNKVFITEDNVQIIPQYLRFLKGVVDSPDLPLNISRETLQNNRVVEQIRKSLTKRVISELGKKAKENLEEYTKFWTNFGAVLKEGLCEAMPTEEREALLSICRFHSTGDKKLVSIDDYISRMKPEQGYIYYLTGNSLDSVKNSPQLEGFISKGLEVLLFVDPVDDFWTSVIHEYKGQKFKSVTRADVDLEKFSPEEKDKENKSDEERAEGNTDSILQYFTKVLGNAVKSVKISKKLTDSPVCLAVDEGAMDLRMERFLREQNQLNYRTPKVLEVNTKHSVIKSIIKSYAENGENPTLEDMVHLLFYQACIVEGEEMDDASLFAKKLNNLLGKVII.

An a; substrate-binding region spans residues 1 to 338; the sequence is MMELKMHNVK…SPDLPLNISR (338 aa). The tract at residues 339-558 is b; sequence ETLQNNRVVE…EGAMDLRMER (220 aa). Residues 493–512 are disordered; that stretch reads KFSPEEKDKENKSDEERAEG. The segment at 559-637 is c; it reads FLREQNQLNY…LNNLLGKVII (79 aa).

Belongs to the heat shock protein 90 family. Homodimer.

It is found in the cytoplasm. Molecular chaperone. Has ATPase activity. The chain is Chaperone protein HtpG from Wolbachia sp. subsp. Brugia malayi (strain TRS).